Consider the following 299-residue polypeptide: uncharacterized protein (299 aa).

The next 8 membrane-spanning stretches (helical) occupy residues Ile13–Met33, Ala36–Leu56, Ser79–Ile99, Thr112–Ile132, Ile151–Ile171, Phe201–Val221, Tyr241–Ser261, and Pro267–Ile287.

This sequence belongs to the ABC-3 integral membrane protein family.

It is found in the plastid. The protein localises to the cyanelle membrane. This is an uncharacterized protein from Cyanophora paradoxa.